Reading from the N-terminus, the 1079-residue chain is Capping protein inhibiting regulator of actin dynamics (1079 aa).

A compositionally biased stretch (basic and acidic residues) spans 1 to 11 (MSQENVSDKVR). Disordered regions lie at residues 1–293 (MSQE…EEER), 308–327 (ERKR…AEKR), 341–383 (EHRI…EWKR), 420–453 (PVTP…PTLS), 493–522 (EGKK…VFES), 606–639 (IFGQ…VQSR), and 658–1054 (PSFL…TTQV). The span at 36–45 (DEGSSDEEEV) shows a compositional bias: acidic residues. Residues 64–76 (SAKEKSVSHDTVQ) show a composition bias toward basic and acidic residues. A compositionally biased stretch (basic residues) spans 115–134 (AKHKLSVKPKNQRVSRKHRR). Residues 140–158 (HEDDFSEIQEEFEKDEEVF) show a composition bias toward acidic residues. The span at 159–293 (DSSREDYGII…EERKRAEEER (135 aa)) shows a compositional bias: basic and acidic residues. The segment covering 420–434 (PVTPATGQQGETTAE) has biased composition (polar residues). Residues 670-682 (PKSQRSESGSPIQ) show a composition bias toward polar residues. A compositionally biased stretch (acidic residues) spans 684–695 (ESEDSDTKDEDG). Residues 756 to 781 (DNSTLSEKSSPISPQQENIEFQTTVA) are compositionally biased toward polar residues. 2 stretches are compositionally biased toward basic and acidic residues: residues 896–930 (WREK…DKET) and 944–983 (GFRE…EDKG). The span at 984-993 (NGSSSIISKH) shows a compositional bias: polar residues. Over residues 994-1016 (QTADENKRPDTLLARFERRDNLK) the composition is skewed to basic and acidic residues. Over residues 1020–1033 (TLPSSVTVEITDST) the composition is skewed to polar residues.

Directly interacts with actin-capping proteins; this interaction decreases the binding of capping proteins to actin.

It is found in the cytoplasm. The protein resides in the cytosol. Functionally, involved in epithelial cell integrity by acting on the maintenance of the actin cytoskeleton. Positively regulates the actin polymerization, by inhibiting the interaction of actin-capping proteins with actin. This chain is Capping protein inhibiting regulator of actin dynamics (crad), found in Danio rerio (Zebrafish).